The chain runs to 288 residues: ATP synthase gamma chain (288 aa).

It belongs to the ATPase gamma chain family. As to quaternary structure, F-type ATPases have 2 components, CF(1) - the catalytic core - and CF(0) - the membrane proton channel. CF(1) has five subunits: alpha(3), beta(3), gamma(1), delta(1), epsilon(1). CF(0) has three main subunits: a, b and c.

It localises to the cell inner membrane. Functionally, produces ATP from ADP in the presence of a proton gradient across the membrane. The gamma chain is believed to be important in regulating ATPase activity and the flow of protons through the CF(0) complex. The sequence is that of ATP synthase gamma chain from Aeromonas hydrophila subsp. hydrophila (strain ATCC 7966 / DSM 30187 / BCRC 13018 / CCUG 14551 / JCM 1027 / KCTC 2358 / NCIMB 9240 / NCTC 8049).